A 384-amino-acid chain; its full sequence is WD repeat-containing protein 55 (384 aa).

The tract at residues 1–33 (MDPTCQESPAEDSNNEEDLDSTKAAPRIRDTPE) is disordered. The span at 9-19 (PAEDSNNEEDL) shows a compositional bias: acidic residues. WD repeat units follow at residues 36–75 (VLEA…GETK), 82–121 (HHLK…LERR), 125–163 (AHSA…PLMD), 166–205 (QHEE…FELL), 208–247 (PQSG…ATSD), 250–289 (ALRA…VVGT), and 293–332 (HAGE…TVVV). Phosphoserine occurs at positions 354 and 383. The disordered stretch occupies residues 362–384 (LREDEEEAKAPEEVSGESDDDSD). Acidic residues predominate over residues 375–384 (VSGESDDDSD).

This sequence belongs to the WD repeat WDR55 family.

It localises to the nucleus. Its subcellular location is the nucleolus. The protein resides in the cytoplasm. Its function is as follows. Nucleolar protein that acts as a modulator of rRNA synthesis. Plays a central role during organogenesis. In Rattus norvegicus (Rat), this protein is WD repeat-containing protein 55 (Wdr55).